We begin with the raw amino-acid sequence, 263 residues long: Elongation factor Ts (263 aa).

Residues 82–85 (TDFV) form an involved in Mg(2+) ion dislocation from EF-Tu region. A compositionally biased stretch (low complexity) spans 221–251 (APPAVVEAPVAETPEPAVAETPEAKPAATES). The interval 221 to 263 (APPAVVEAPVAETPEPAVAETPEAKPAATESKPAKSKSAKKKK) is disordered. The segment covering 254–263 (AKSKSAKKKK) has biased composition (basic residues).

Belongs to the EF-Ts family.

The protein resides in the cytoplasm. In terms of biological role, associates with the EF-Tu.GDP complex and induces the exchange of GDP to GTP. It remains bound to the aminoacyl-tRNA.EF-Tu.GTP complex up to the GTP hydrolysis stage on the ribosome. This is Elongation factor Ts from Cyanothece sp. (strain PCC 7425 / ATCC 29141).